Consider the following 480-residue polypeptide: Ciliated left-right organizer protein containing ZP-N domains homolog (480 aa).

The signal sequence occupies residues 1–23 (MKNQHNTFWVLCLLFVMFDETFS).

In terms of tissue distribution, expressed specifically by cells of the ciliated left-right organizer.

The protein resides in the secreted. This is Ciliated left-right organizer protein containing ZP-N domains homolog from Xenopus tropicalis (Western clawed frog).